Here is a 254-residue protein sequence, read N- to C-terminus: 4-hydroxy-tetrahydrodipicolinate reductase (254 aa).

Position 7–12 (7–12 (GASGRI)) interacts with NAD(+). R35 contributes to the NADP(+) binding site. NAD(+) is bound by residues 91–93 (GTT) and 115–118 (AHNM). Residue H147 is the Proton donor/acceptor of the active site. H148 is a (S)-2,3,4,5-tetrahydrodipicolinate binding site. The active-site Proton donor is K151. 157 to 158 (GT) provides a ligand contact to (S)-2,3,4,5-tetrahydrodipicolinate.

The protein belongs to the DapB family.

It localises to the cytoplasm. The enzyme catalyses (S)-2,3,4,5-tetrahydrodipicolinate + NAD(+) + H2O = (2S,4S)-4-hydroxy-2,3,4,5-tetrahydrodipicolinate + NADH + H(+). It carries out the reaction (S)-2,3,4,5-tetrahydrodipicolinate + NADP(+) + H2O = (2S,4S)-4-hydroxy-2,3,4,5-tetrahydrodipicolinate + NADPH + H(+). Its pathway is amino-acid biosynthesis; L-lysine biosynthesis via DAP pathway; (S)-tetrahydrodipicolinate from L-aspartate: step 4/4. In terms of biological role, catalyzes the conversion of 4-hydroxy-tetrahydrodipicolinate (HTPA) to tetrahydrodipicolinate. This Helicobacter pylori (strain Shi470) protein is 4-hydroxy-tetrahydrodipicolinate reductase.